Consider the following 890-residue polypeptide: Nitrate reductase [NADH] 2 (890 aa).

Cys-165 serves as a coordination point for Mo-molybdopterin. Residues 513–588 form the Cytochrome b5 heme-binding domain; that stretch reads SKMFSVSEVK…LEDYRIGELI (76 aa). His-548 and His-571 together coordinate heme. The region spanning 634–746 is the FAD-binding FR-type domain; that stretch reads RQKIPCKLVS…KGPLGHIEYT (113 aa). Residues 686-689, 703-707, Phe-708, Phe-715, 720-722, and Thr-773 each bind FAD; these read RAYT, LIKVY, and LMS.

This sequence belongs to the nitrate reductase family. Homodimer. FAD serves as cofactor. Requires heme as cofactor. The cofactor is Mo-molybdopterin.

The enzyme catalyses nitrite + NAD(+) + H2O = nitrate + NADH + H(+). Functionally, nitrate reductase is a key enzyme involved in the first step of nitrate assimilation in plants, fungi and bacteria. The chain is Nitrate reductase [NADH] 2 (NIA2) from Phaseolus vulgaris (Kidney bean).